We begin with the raw amino-acid sequence, 417 residues long: Actin-like protein 7B (417 aa).

The disordered stretch occupies residues 1 to 39; it reads MATKNNPSPKPMGTAQGDPGEAGTLPAPEAGIRDTGSTQ. A Phosphoserine modification is found at Ser8.

Belongs to the actin family.

Its subcellular location is the cytoplasm. It localises to the cytoskeleton. In Rattus norvegicus (Rat), this protein is Actin-like protein 7B (Actl7b).